The primary structure comprises 132 residues: U11/U12 small nuclear ribonucleoprotein 25 kDa protein (132 aa).

Residues 41–132 (MTVRVCKMDG…VSFIKKLRQK (92 aa)) form the Ubiquitin-like domain.

Component of the U11/U12 snRNPs that are part of the U12-type spliceosome.

It localises to the nucleus. This Homo sapiens (Human) protein is U11/U12 small nuclear ribonucleoprotein 25 kDa protein (SNRNP25).